The sequence spans 216 residues: ATP-dependent Clp protease proteolytic subunit (216 aa).

Ser101 functions as the Nucleophile in the catalytic mechanism. The active site involves His126.

It belongs to the peptidase S14 family. Component of the chloroplastic Clp protease core complex.

Its subcellular location is the plastid. It is found in the chloroplast stroma. The catalysed reaction is Hydrolysis of proteins to small peptides in the presence of ATP and magnesium. alpha-casein is the usual test substrate. In the absence of ATP, only oligopeptides shorter than five residues are hydrolyzed (such as succinyl-Leu-Tyr-|-NHMec, and Leu-Tyr-Leu-|-Tyr-Trp, in which cleavage of the -Tyr-|-Leu- and -Tyr-|-Trp bonds also occurs).. Functionally, cleaves peptides in various proteins in a process that requires ATP hydrolysis. Has a chymotrypsin-like activity. Plays a major role in the degradation of misfolded proteins. This chain is ATP-dependent Clp protease proteolytic subunit, found in Saccharum hybrid (Sugarcane).